Consider the following 331-residue polypeptide: Adenosine deaminase (331 aa).

Residues His-12 and His-14 each coordinate Zn(2+). Residues His-14, Asp-16, and Gly-170 each contribute to the substrate site. Residue His-197 coordinates Zn(2+). The active-site Proton donor is Glu-200. Asp-278 is a binding site for Zn(2+). Asp-279 is a binding site for substrate.

Belongs to the metallo-dependent hydrolases superfamily. Adenosine and AMP deaminases family. Adenosine deaminase subfamily. Requires Zn(2+) as cofactor.

The catalysed reaction is adenosine + H2O + H(+) = inosine + NH4(+). It carries out the reaction 2'-deoxyadenosine + H2O + H(+) = 2'-deoxyinosine + NH4(+). Its function is as follows. Catalyzes the hydrolytic deamination of adenosine and 2-deoxyadenosine. The chain is Adenosine deaminase from Shewanella baltica (strain OS185).